Here is a 273-residue protein sequence, read N- to C-terminus: Large ribosomal subunit protein uL2 (273 aa).

Disordered stretches follow at residues 28 to 53 and 221 to 273; these read KPFA…TTRH and RGTA…RRSK. Residues 39–48 are compositionally biased toward low complexity; sequence KSGGRNNNGR.

The protein belongs to the universal ribosomal protein uL2 family. In terms of assembly, part of the 50S ribosomal subunit. Forms a bridge to the 30S subunit in the 70S ribosome.

Its function is as follows. One of the primary rRNA binding proteins. Required for association of the 30S and 50S subunits to form the 70S ribosome, for tRNA binding and peptide bond formation. It has been suggested to have peptidyltransferase activity; this is somewhat controversial. Makes several contacts with the 16S rRNA in the 70S ribosome. This is Large ribosomal subunit protein uL2 from Klebsiella pneumoniae (strain 342).